The primary structure comprises 350 residues: Phosphotriesterase-related protein (350 aa).

A divalent metal cation-binding residues include H22, H24, E169, H201, H230, and D298.

The protein belongs to the metallo-dependent hydrolases superfamily. Phosphotriesterase family. Requires a divalent metal cation as cofactor.

This is Phosphotriesterase-related protein from Drosophila grimshawi (Hawaiian fruit fly).